Reading from the N-terminus, the 226-residue chain is ATP synthase subunit a (226 aa).

5 helical membrane passes run 17–37 (FLFV…AKLA), 78–98 (LVAT…IPGF), 104–124 (NINF…FEGI), 175–195 (LFVW…GFAL), and 201–221 (FLQT…AVLL).

It belongs to the ATPase A chain family. As to quaternary structure, F-type ATPases have 2 components, CF(1) - the catalytic core - and CF(0) - the membrane proton channel. CF(1) has five subunits: alpha(3), beta(3), gamma(1), delta(1), epsilon(1). CF(0) has three main subunits: a(1), b(2) and c(9-12). The alpha and beta chains form an alternating ring which encloses part of the gamma chain. CF(1) is attached to CF(0) by a central stalk formed by the gamma and epsilon chains, while a peripheral stalk is formed by the delta and b chains.

Its subcellular location is the cell inner membrane. Key component of the proton channel; it plays a direct role in the translocation of protons across the membrane. The chain is ATP synthase subunit a from Nitratiruptor sp. (strain SB155-2).